Here is a 722-residue protein sequence, read N- to C-terminus: Bifunctional UDP-N-acetylglucosamine 2-epimerase/N-acetylmannosamine kinase (722 aa).

UDP contacts are provided by arginine 19, serine 23, arginine 113, histidine 220, and asparagine 253. The CMP-N-acetyl-beta-neuraminate site is built by lysine 259, glutamate 271, lysine 280, and histidine 281. UDP contacts are provided by valine 282, serine 301, serine 302, glutamate 307, and arginine 321. Positions 406–722 are N-acetylmannosamine kinase; sequence TLSALAVDLG…VLDYTTRRIH (317 aa). Aspartate 413 lines the Mg(2+) pocket. Glycine 416 contributes to the an N-acyl-D-mannosamine 6-phosphate binding site. ADP-binding residues include threonine 417, asparagine 418, and arginine 420. Positions 476, 477, 489, 516, 517, and 545 each coordinate an N-acyl-D-mannosamine 6-phosphate. Positions 476, 477, 489, 516, and 517 each coordinate an N-acyl-D-mannosamine. Aspartate 517 is a catalytic residue. The an N-acyl-D-mannosamine site is built by glutamate 566 and histidine 569. Residue histidine 569 participates in an N-acyl-D-mannosamine 6-phosphate binding. Residues histidine 569, cysteine 579, cysteine 581, and cysteine 586 each contribute to the Zn(2+) site. Residue glutamate 588 participates in an N-acyl-D-mannosamine 6-phosphate binding. Glutamate 588 contributes to the an N-acyl-D-mannosamine binding site.

The protein in the N-terminal section; belongs to the UDP-N-acetylglucosamine 2-epimerase family. This sequence in the C-terminal section; belongs to the ROK (NagC/XylR) family. As to quaternary structure, homodimer. Homotetramer. Homohexamer. The hexameric form exhibits both enzyme activities, whereas the dimeric form only catalyzes the phosphorylation of N-acyl-D-mannosamine. Phosphorylated. Phosphorylation by PKC activates the UDP-N-acetylglucosamine 2-epimerase activity.

Its subcellular location is the cytoplasm. It localises to the cytosol. The catalysed reaction is UDP-N-acetyl-alpha-D-glucosamine + H2O = aldehydo-N-acetyl-D-mannosamine + UDP + H(+). The enzyme catalyses an N-acyl-D-mannosamine + ATP = an N-acyl-D-mannosamine 6-phosphate + ADP + H(+). It participates in amino-sugar metabolism; N-acetylneuraminate biosynthesis. With respect to regulation, the UDP-N-acetylglucosamine 2-epimerase activity, in contrast to the N-acetylmannosamine kinase activity, exhibits allosteric regulation by cytidine monophosphate-N-acetylneuraminic acid (CMP-Neu5Ac), the end product of neuraminic acid biosynthesis. Moreover, the activity is contingent upon the oligomeric state of the enzyme. The monomeric form is inactive, while the dimeric form selectively catalyzes the phosphorylation of N-acetylmannosamine. The hexameric form, on the other hand, demonstrates full proficiency in both enzyme activities. Furthermore, the UDP-N-acetylglucosamine 2-epimerase activity is increased by PKC-mediated phosphorylation. Its function is as follows. Bifunctional enzyme that possesses both UDP-N-acetylglucosamine 2-epimerase and N-acetylmannosamine kinase activities, and serves as the initiator of the biosynthetic pathway leading to the production of N-acetylneuraminic acid (NeuAc), a critical precursor in the synthesis of sialic acids. By catalyzing this pivotal and rate-limiting step in sialic acid biosynthesis, this enzyme assumes a pivotal role in governing the regulation of cell surface sialylation, playing a role in embryonic angiogenesis. Sialic acids represent a category of negatively charged sugars that reside on the surface of cells as terminal components of glycoconjugates and mediate important functions in various cellular processes, including cell adhesion, signal transduction, and cellular recognition. This is Bifunctional UDP-N-acetylglucosamine 2-epimerase/N-acetylmannosamine kinase (GNE) from Cricetulus griseus (Chinese hamster).